Reading from the N-terminus, the 79-residue chain is MKKTFCFILILVCIVLKSVNAEEEDNFEESSLEMETARCASKNERCGNALYGTKGPGCCNGKCICRTVPRKGVNSCRCM.

The N-terminal stretch at Met-1 to Ala-21 is a signal peptide. Positions Glu-22–Arg-38 are excised as a propeptide. 4 cysteine pairs are disulfide-bonded: Cys-39-Cys-59, Cys-46-Cys-63, Cys-58-Cys-78, and Cys-65-Cys-76.

Expressed by the venom duct.

It is found in the secreted. Insect-specific toxin that probably acts as an inhibitor of presynaptic insect calcium channels, presumably Cav2 subtype. In vivo, induces immediate paralysis on insects, followed by death when high doses are injected. The chain is Omega-phylotoxin-To1a from Tibellus oblongus (Oblong running crab spider).